Reading from the N-terminus, the 363-residue chain is Pyrimidine monooxygenase RutA (363 aa).

Residues 49-50, Asn115, Glu124, 140-141, and Ser190 each bind FMN; these read IK and RY.

Belongs to the NtaA/SnaA/DszA monooxygenase family. RutA subfamily.

The catalysed reaction is uracil + FMNH2 + NADH + O2 = (Z)-3-ureidoacrylate + FMN + NAD(+) + H2O + H(+). The enzyme catalyses thymine + FMNH2 + NADH + O2 = (Z)-2-methylureidoacrylate + FMN + NAD(+) + H2O + H(+). Its function is as follows. Catalyzes the pyrimidine ring opening between N-3 and C-4 by an unusual flavin hydroperoxide-catalyzed mechanism, adding oxygen atoms in the process to yield ureidoacrylate peracid, that immediately reacts with FMN forming ureidoacrylate and FMN-N(5)-oxide. The FMN-N(5)-oxide reacts spontaneously with NADH to produce FMN. Requires the flavin reductase RutF to regenerate FMN in vivo. The chain is Pyrimidine monooxygenase RutA from Escherichia coli O6:K15:H31 (strain 536 / UPEC).